The sequence spans 483 residues: Probable glycosyltransferase 4 (483 aa).

The Cytoplasmic portion of the chain corresponds to 1 to 26 (MSKLQDRHGGEAAADVGRRARHQRLL). The chain crosses the membrane as a helical; Signal-anchor for type II membrane protein span at residues 27-47 (LSFPVFPIVLLLLAPCTIFFF). The Lumenal segment spans residues 48-483 (TSGDVPLPRI…KKTSRAARPM (436 aa)). The segment at 71–119 (AVAADTSPPPPSPPSSSPPPLSFPPPPPPPSSPPPPALPVVDDHSDTQR) is disordered. Over residues 77-108 (SPPPPSPPSSSPPPLSFPPPPPPPSSPPPPAL) the composition is skewed to pro residues. The N-linked (GlcNAc...) asparagine glycan is linked to Asn448.

This sequence belongs to the glycosyltransferase 34 family.

The protein resides in the golgi apparatus membrane. Probable glycosyltransferase that may be involved in the biosynthesis of xyloglucan. The protein is Probable glycosyltransferase 4 of Oryza sativa subsp. indica (Rice).